We begin with the raw amino-acid sequence, 343 residues long: Protein FAM50A-B (343 aa).

Disordered stretches follow at residues Met-1–Arg-25 and Glu-125–Asn-181. Acidic residues predominate over residues Glu-125–Tyr-142. Residues Pro-172–Asn-181 show a composition bias toward basic and acidic residues.

The protein belongs to the FAM50 family.

Its subcellular location is the nucleus. Probably involved in the regulation of pre-mRNA splicing. This Xenopus laevis (African clawed frog) protein is Protein FAM50A-B (fam50a-b).